Here is a 143-residue protein sequence, read N- to C-terminus: Small ribosomal subunit protein eS6 (143 aa).

Belongs to the eukaryotic ribosomal protein eS6 family.

The chain is Small ribosomal subunit protein eS6 from Methanoregula boonei (strain DSM 21154 / JCM 14090 / 6A8).